The following is a 233-amino-acid chain: Probable tetraheme cytochrome c-type (233 aa).

Residues 1–28 (MTRLQKGSIGTLLTGALLGIVLVAVVFG) form the signal peptide. Heme-binding residues include Cys39, Cys42, Met45, Cys67, Cys70, His71, Glu93, Cys131, Cys134, His135, Cys159, Cys162, His163, and His168. The disordered stretch occupies residues 182 to 233 (QGKLVLKPEDDGDDEEADEDEDEETEEADDSSDSESASSSDNSDNEDDNNDE). 2 stretches are compositionally biased toward acidic residues: residues 191-214 (DDGDDEEADEDEDEETEEADDSSD) and 224-233 (SDNEDDNNDE).

This sequence belongs to the NapC/NirT/NrfH family. Post-translationally, binds 4 heme groups per subunit.

The protein resides in the periplasm. The polypeptide is Probable tetraheme cytochrome c-type (cycX1) (Nitrosomonas europaea (strain ATCC 19718 / CIP 103999 / KCTC 2705 / NBRC 14298)).